A 100-amino-acid polypeptide reads, in one-letter code: NADH-quinone oxidoreductase subunit K (100 aa).

3 consecutive transmembrane segments (helical) span residues 4 to 24 (LSHG…GMII), 28 to 48 (LLFM…AFVV), and 60 to 80 (VMYI…LALL).

Belongs to the complex I subunit 4L family. NDH-1 is composed of 13 different subunits. Subunits NuoA, H, J, K, L, M, N constitute the membrane sector of the complex.

It localises to the cell inner membrane. It carries out the reaction a quinone + NADH + 5 H(+)(in) = a quinol + NAD(+) + 4 H(+)(out). Functionally, NDH-1 shuttles electrons from NADH, via FMN and iron-sulfur (Fe-S) centers, to quinones in the respiratory chain. The immediate electron acceptor for the enzyme in this species is believed to be ubiquinone. Couples the redox reaction to proton translocation (for every two electrons transferred, four hydrogen ions are translocated across the cytoplasmic membrane), and thus conserves the redox energy in a proton gradient. The protein is NADH-quinone oxidoreductase subunit K of Sodalis glossinidius (strain morsitans).